We begin with the raw amino-acid sequence, 271 residues long: Hydroxyethylthiazole kinase (271 aa).

M45 lines the substrate pocket. 2 residues coordinate ATP: R121 and T168. Residue G195 participates in substrate binding.

It belongs to the Thz kinase family. Mg(2+) serves as cofactor.

The catalysed reaction is 5-(2-hydroxyethyl)-4-methylthiazole + ATP = 4-methyl-5-(2-phosphooxyethyl)-thiazole + ADP + H(+). It participates in cofactor biosynthesis; thiamine diphosphate biosynthesis; 4-methyl-5-(2-phosphoethyl)-thiazole from 5-(2-hydroxyethyl)-4-methylthiazole: step 1/1. Catalyzes the phosphorylation of the hydroxyl group of 4-methyl-5-beta-hydroxyethylthiazole (THZ). The polypeptide is Hydroxyethylthiazole kinase (Bacillus pumilus (strain SAFR-032)).